A 185-amino-acid polypeptide reads, in one-letter code: Elongation factor P (185 aa).

It belongs to the elongation factor P family.

It is found in the cytoplasm. It participates in protein biosynthesis; polypeptide chain elongation. Involved in peptide bond synthesis. Stimulates efficient translation and peptide-bond synthesis on native or reconstituted 70S ribosomes in vitro. Probably functions indirectly by altering the affinity of the ribosome for aminoacyl-tRNA, thus increasing their reactivity as acceptors for peptidyl transferase. The polypeptide is Elongation factor P (Symbiobacterium thermophilum (strain DSM 24528 / JCM 14929 / IAM 14863 / T)).